Consider the following 187-residue polypeptide: Peptidyl-tRNA hydrolase (187 aa).

Position 18 (Tyr-18) interacts with tRNA. His-23 acts as the Proton acceptor in catalysis. 3 residues coordinate tRNA: Phe-65, Asn-67, and Asn-113.

It belongs to the PTH family. In terms of assembly, monomer.

Its subcellular location is the cytoplasm. The enzyme catalyses an N-acyl-L-alpha-aminoacyl-tRNA + H2O = an N-acyl-L-amino acid + a tRNA + H(+). Functionally, hydrolyzes ribosome-free peptidyl-tRNAs (with 1 or more amino acids incorporated), which drop off the ribosome during protein synthesis, or as a result of ribosome stalling. In terms of biological role, catalyzes the release of premature peptidyl moieties from peptidyl-tRNA molecules trapped in stalled 50S ribosomal subunits, and thus maintains levels of free tRNAs and 50S ribosomes. This chain is Peptidyl-tRNA hydrolase, found in Coxiella burnetii (strain RSA 331 / Henzerling II).